The primary structure comprises 305 residues: Serine/threonine-protein kinase 16 (305 aa).

Glycine 2 is lipidated: N-myristoyl glycine. 2 S-palmitoyl cysteine lipidation sites follow: cysteine 6 and cysteine 8. In terms of domain architecture, Protein kinase spans 20–293 (YLFVQKLGEG…PVLLSQLEAL (274 aa)). Residues 26–34 (LGEGGFSYV) and lysine 49 contribute to the ATP site. The active-site Proton acceptor is the aspartate 148. The tract at residues 166–202 (DLGSMNQACIQVEGSRQALALQDWAAQRCTISYRAPE) is activation loop. At serine 197 the chain carries Phosphoserine; by autocatalysis. Tyrosine 198 is modified (phosphotyrosine; by autocatalysis).

Belongs to the protein kinase superfamily. Ser/Thr protein kinase family. Monomer. Interacts with DRG1 (via its N-terminal); the interaction phosphorylates DRG1. In terms of processing, mainly autophosphorylated on serine/threonine residues. Also autophosphorylated on Tyr-198. As to expression, expressed in heart, liver, brain, spleen, lung, skeletal muscle, kidney and testis.

The protein localises to the cytoplasm. It is found in the perinuclear region. Its subcellular location is the membrane. It carries out the reaction L-seryl-[protein] + ATP = O-phospho-L-seryl-[protein] + ADP + H(+). The catalysed reaction is L-threonyl-[protein] + ATP = O-phospho-L-threonyl-[protein] + ADP + H(+). It catalyses the reaction L-tyrosyl-[protein] + ATP = O-phospho-L-tyrosyl-[protein] + ADP + H(+). Functionally, membrane-associated protein kinase that phosphorylates on serine and threonine residues. In vitro substrates include DRG1, ENO1 and EIF4EBP1. Also autophosphorylates. May be involved in secretory vesicle trafficking or intracellular signaling. May have a role in regulating stromal-epithelial interactions that occur during ductal morphogenesis in the mammary gland. May be involved in TGF-beta signaling. Able to autophosphorylate on Tyr residue; it is however unclear whether it has tyrosine-protein kinase toward other proteins. The polypeptide is Serine/threonine-protein kinase 16 (Stk16) (Rattus norvegicus (Rat)).